A 262-amino-acid chain; its full sequence is Small ribosomal subunit protein eS1 (262 aa).

The segment covering 1-18 (MAVGKNKRISKGKKGSKK) has biased composition (basic residues). A disordered region spans residues 1–20 (MAVGKNKRISKGKKGSKKKT).

This sequence belongs to the eukaryotic ribosomal protein eS1 family. As to quaternary structure, component of the small ribosomal subunit. Mature ribosomes consist of a small (40S) and a large (60S) subunit. The 40S subunit contains about 33 different proteins and 1 molecule of RNA (18S). The 60S subunit contains about 49 different proteins and 3 molecules of RNA (25S, 5.8S and 5S).

Its subcellular location is the cytoplasm. The sequence is that of Small ribosomal subunit protein eS1 from Oryza sativa subsp. japonica (Rice).